A 555-amino-acid chain; its full sequence is Gamma-aminobutyric acid receptor subunit alpha-4 (555 aa).

A signal peptide spans 1–35 (MVSAKKVPAIAMSFGVSFALLHFLCLAACLNESPG). The Extracellular portion of the chain corresponds to 36 to 259 (QNQKEEKLCP…FHLRRKMGYF (224 aa)). A glycan (N-linked (GlcNAc...) asparagine) is linked at Asn47. Residue Arg100 participates in 4-aminobutanoate binding. Residues Asn144 and Asn157 are each glycosylated (N-linked (GlcNAc...) asparagine). A 4-aminobutanoate-binding site is contributed by Thr163. Cysteines 172 and 186 form a disulfide. Residues 260–280 (MIQTYIPCIMTVILSQVSFWI) traverse the membrane as a helical segment. Over 281 to 284 (NKES) the chain is Cytoplasmic. The chain crosses the membrane as a helical span at residues 285–305 (VPARTVFGITTVLTMTTLSIS). Over 306–318 (ARHSLPKVSYATA) the chain is Extracellular. Residues 319–341 (MDWFIAVCFAFVFSALIEFAAVN) traverse the membrane as a helical segment. Over 342–518 (YFTNVQMEKA…PPPSGSGTSK (177 aa)) the chain is Cytoplasmic. 2 disordered regions span residues 354–435 (KTSK…SPNP) and 495–516 (GTSG…GSGT). Residues 410–421 (SSKSSTVVQGSS) show a composition bias toward low complexity. A compositionally biased stretch (polar residues) spans 422-435 (EATPQSYLASSPNP). Residues 519–545 (IDKYARILFPVTFGAFNMVYWVVYLSK) form a helical membrane-spanning segment. Residues 546-555 (DTMEKSESLM) lie on the Extracellular side of the membrane.

This sequence belongs to the ligand-gated ion channel (TC 1.A.9) family. Gamma-aminobutyric acid receptor (TC 1.A.9.5) subfamily. GABRA4 sub-subfamily. In terms of assembly, heteropentamer, formed by a combination of alpha (GABRA1-6), beta (GABRB1-3), gamma (GABRG1-3), delta (GABRD), epsilon (GABRE), rho (GABRR1-3), pi (GABRP) and theta (GABRQ) chains, each subunit exhibiting distinct physiological and pharmacological properties. Expressed in the brain.

The protein resides in the cell membrane. It is found in the postsynaptic cell membrane. It carries out the reaction chloride(in) = chloride(out). Its activity is regulated as follows. Potentiated by histamine. In terms of biological role, alpha subunit of the heteropentameric ligand-gated chloride channel gated by gamma-aminobutyric acid (GABA), a major inhibitory neurotransmitter in the brain. GABA-gated chloride channels, also named GABA(A) receptors (GABAAR), consist of five subunits arranged around a central pore and contain GABA active binding site(s) located at the alpha and beta subunit interface(s). When activated by GABA, GABAARs selectively allow the flow of chloride anions across the cell membrane down their electrochemical gradient. GABAARs containing alpha-4 are predominantly extrasynaptic, contributing to tonic inhibition in dentate granule cells and thalamic relay neurons. Extrasynaptic alpha-4-containing GABAARs control levels of excitability and network activity. GABAARs containing alpha-4 are often found with the delta or gamma-2 subunits, in combination with beta subunits. GABAAR containing alpha-4-beta-3-delta subunits can simultaneously bind GABA and histamine where histamine binds at the interface of two neighboring beta subunits, which may be involved in the regulation of sleep and wakefulness. In Bos taurus (Bovine), this protein is Gamma-aminobutyric acid receptor subunit alpha-4 (GABRA4).